The sequence spans 259 residues: MLHLFLFSSAASTTTAVEDNSTTMPPSSRSAANQNSSSSLHLCKHSPSATLDLLILILVLFSGTFLLSSYFSYLIHSLSLLSSHFPSITISLSSLLPPLIIFFSSDHSTEDEDHHHPSGKIPPPASFFFAFAVFFAASIAFLDLCCGSRSRKCRNPKCKGMKKAMEFDLQLQTEECVKSGSVKEIDRLPWKGGSESNPDYECLRAELRKMAPVNGRAVLIFRSKCGCPIAKLEGWGPKRSRRHKKSPAKLAVKGCIDNR.

3 helical membrane-spanning segments follow: residues 55-75, 85-105, and 127-147; these read ILILVLFSGTFLLSSYFSYLI, FPSITISLSSLLPPLIIFFSS, and FFFAFAVFFAASIAFLDLCCG.

It localises to the membrane. This is an uncharacterized protein from Arabidopsis thaliana (Mouse-ear cress).